The chain runs to 267 residues: Shikimate dehydrogenase (NADP(+)) (267 aa).

Shikimate contacts are provided by residues 14 to 16 (SLS) and T61. K65 (proton acceptor) is an active-site residue. N86 and D101 together coordinate shikimate. Residues 126 to 130 (GAGGA), 150 to 155 (NRTHSK), and L213 each bind NADP(+). Y215 is a shikimate binding site. NADP(+) is bound at residue G236.

Belongs to the shikimate dehydrogenase family. As to quaternary structure, homodimer.

The enzyme catalyses shikimate + NADP(+) = 3-dehydroshikimate + NADPH + H(+). Its pathway is metabolic intermediate biosynthesis; chorismate biosynthesis; chorismate from D-erythrose 4-phosphate and phosphoenolpyruvate: step 4/7. In terms of biological role, involved in the biosynthesis of the chorismate, which leads to the biosynthesis of aromatic amino acids. Catalyzes the reversible NADPH linked reduction of 3-dehydroshikimate (DHSA) to yield shikimate (SA). The polypeptide is Shikimate dehydrogenase (NADP(+)) (Vesicomyosocius okutanii subsp. Calyptogena okutanii (strain HA)).